Consider the following 607-residue polypeptide: Methylmalonate-semialdehyde dehydrogenase [acylating], mitochondrial (607 aa).

The tract at residues 1–69 (MVRVKQKNLE…KLRSSSSTTT (69 aa)) is disordered. The N-terminal 98 residues, 1–98 (MVRVKQKNLE…QFLALRSSWL (98 aa)), are a transit peptide targeting the mitochondrion. Residues 9–30 (LESYRSNGTYPPTWRNPTTSFA) are compositionally biased toward polar residues. A compositionally biased stretch (basic residues) spans 42–51 (LKSKTKRRRL). Residues phenylalanine 259, lysine 283, glutamate 286, lysine 287, and serine 336 each contribute to the NAD(+) site. Cysteine 391 functions as the Nucleophile in the catalytic mechanism. Glutamate 491 serves as a coordination point for NAD(+).

Belongs to the aldehyde dehydrogenase family.

Its subcellular location is the mitochondrion. It carries out the reaction 2-methyl-3-oxopropanoate + NAD(+) + CoA + H2O = propanoyl-CoA + hydrogencarbonate + NADH + H(+). The polypeptide is Methylmalonate-semialdehyde dehydrogenase [acylating], mitochondrial (ALDH6B2) (Arabidopsis thaliana (Mouse-ear cress)).